The primary structure comprises 288 residues: Heme oxygenase 1 (288 aa).

Residues 1–265 (MERPQPDSMP…KPPLNTRSQA (265 aa)) lie on the Cytoplasmic side of the membrane. Residues lysine 18, histidine 25, tyrosine 134, and arginine 183 each contribute to the heme b site. The disordered stretch occupies residues 223–260 (HDTKDQSPSRAPGLRQRASNKVQDSAPVETPRGKPPLN). Position 229 is a phosphoserine (serine 229). A helical; Anchor for type IV membrane protein membrane pass occupies residues 266 to 288 (PLLRWVLTLSFLVATVAVGLYAM).

The protein belongs to the heme oxygenase family. (Microbial infection) Interacts with SARS-CoV-2 ORF3A protein; the interaction promotes ORF3A-induced autophagy but is unlikely to be involved in ORF3A-mediated induction of reticulophagy. In terms of assembly, homodimer and higher order homooligomer. Oligomerization is crucial for its stability and function in the endoplasmic reticulum. Interacts with FLVCR2; this interaction is potentiated in the presence of heme. A soluble form arises by proteolytic removal of the membrane anchor. Expressed at higher levels in renal cancer tissue than in normal tissue (at protein level).

Its subcellular location is the endoplasmic reticulum membrane. It catalyses the reaction heme b + 3 reduced [NADPH--hemoprotein reductase] + 3 O2 = biliverdin IXalpha + CO + Fe(2+) + 3 oxidized [NADPH--hemoprotein reductase] + 3 H2O + H(+). Functionally, catalyzes the oxidative cleavage of heme at the alpha-methene bridge carbon, released as carbon monoxide (CO), to generate biliverdin IXalpha, while releasing the central heme iron chelate as ferrous iron. Affords protection against programmed cell death and this cytoprotective effect relies on its ability to catabolize free heme and prevent it from sensitizing cells to undergo apoptosis. Its function is as follows. (Microbial infection) During SARS-COV-2 infection, promotes SARS-CoV-2 ORF3A-mediated autophagy but is unlikely to be required for ORF3A-mediated induction of reticulophagy. Catalyzes the oxidative cleavage of heme at the alpha-methene bridge carbon, released as carbon monoxide (CO), to generate biliverdin IXalpha, while releasing the central heme iron chelate as ferrous iron. In Homo sapiens (Human), this protein is Heme oxygenase 1 (HMOX1).